A 236-amino-acid chain; its full sequence is Small ribosomal subunit protein uS2c (236 aa).

This sequence belongs to the universal ribosomal protein uS2 family.

It localises to the plastid. The protein resides in the chloroplast. This Olimarabidopsis pumila (Dwarf rocket) protein is Small ribosomal subunit protein uS2c (rps2).